The chain runs to 113 residues: Hydrogenase maturation factor HypA (113 aa).

His-2 contributes to the Ni(2+) binding site. Cys-73, Cys-76, Cys-89, and Cys-92 together coordinate Zn(2+).

This sequence belongs to the HypA/HybF family.

In terms of biological role, involved in the maturation of [NiFe] hydrogenases. Required for nickel insertion into the metal center of the hydrogenase. In Rhodopseudomonas palustris (strain BisA53), this protein is Hydrogenase maturation factor HypA.